Here is a 351-residue protein sequence, read N- to C-terminus: Prostaglandin reductase 2 (351 aa).

99–100 (FY) contributes to the substrate binding site. NADP(+) contacts are provided by residues 165–168 (GACG), Lys-192, Tyr-208, Asn-231, 253–259 (CGQISQY), 287–289 (FLV), and Asn-337. A substrate-binding site is contributed by 288-290 (LVL).

It belongs to the NADP-dependent oxidoreductase L4BD family. In terms of assembly, monomer. In terms of tissue distribution, widely expressed.

The protein resides in the cytoplasm. It carries out the reaction 13,14-dihydro-15-oxo-prostaglandin E2 + NAD(+) = 15-oxoprostaglandin E2 + NADH + H(+). It catalyses the reaction 13,14-dihydro-15-oxo-prostaglandin E2 + NADP(+) = 15-oxoprostaglandin E2 + NADPH + H(+). The catalysed reaction is 13,14-dihydro-15-oxo-PGF2alpha + NADP(+) = 15-oxoprostaglandin F2alpha + NADPH + H(+). The enzyme catalyses 13,14-dihydro-15-oxo-prostaglandin E1 + NADP(+) = 15-oxoprostaglandin E1 + NADPH + H(+). It carries out the reaction 13,14-dihydro-15-oxo-prostaglandin F1alpha + NADP(+) = 15-oxoprostaglandin F1alpha + NADPH + H(+). In terms of biological role, functions as 15-oxo-prostaglandin 13-reductase and acts on 15-keto-PGE1, 15-keto-PGE2, 15-keto-PGE1-alpha and 15-keto-PGE2-alpha with highest activity towards 15-keto-PGE2. Overexpression represses transcriptional activity of PPARG and inhibits adipocyte differentiation. The chain is Prostaglandin reductase 2 from Homo sapiens (Human).